The chain runs to 160 residues: Large ribosomal subunit protein bL17 (160 aa).

The interval 128 to 160 (KKATKTRRSRKRKSADVVVEAAPAEETPKAAEE) is disordered. The segment covering 129-140 (KATKTRRSRKRK) has biased composition (basic residues).

This sequence belongs to the bacterial ribosomal protein bL17 family. Part of the 50S ribosomal subunit. Contacts protein L32.

The sequence is that of Large ribosomal subunit protein bL17 from Porphyromonas gingivalis (strain ATCC 33277 / DSM 20709 / CIP 103683 / JCM 12257 / NCTC 11834 / 2561).